The primary structure comprises 131 residues: Hydrogenase maturation factor HypA (131 aa).

His2 lines the Ni(2+) pocket. Positions 74, 77, 91, and 94 each coordinate Zn(2+).

This sequence belongs to the HypA/HybF family.

Its function is as follows. Involved in the maturation of [NiFe] hydrogenases. Required for nickel insertion into the metal center of the hydrogenase. The chain is Hydrogenase maturation factor HypA from Streptomyces avermitilis (strain ATCC 31267 / DSM 46492 / JCM 5070 / NBRC 14893 / NCIMB 12804 / NRRL 8165 / MA-4680).